Consider the following 406-residue polypeptide: MARALLIVLDSVGIGGAPDADRYGDAGSDTVGHIAEACAAGRGDRPGLRAGPLHLPNLAALGLGLACEGATGRVPPGLAPEGPVRALWGHAVETAAGKDTPSGHWEIAGVPVREAWGHFPDTQPAFPAELTAALVARAGLPGILGDCHASGTAIIEALGAEHVRTGKPICYTSADSVFQIAAHEEAFGLERLYETCRIAREVCDPYRVGRVIARPFLGSAAEGFRRTSHRKDFSVAPPAGTLLDGLETAGRAVVSVGKIGDIFAHRATGREIKPAGNAACLDAALDAFAGLPEGGFVFLNLVDFDTEHGHRRDVPGYAAELEAFDRRLPEIQAVLKPGDLCVITADHGNDPTWTGTEHTREQVPVLAFGPGLAPRALGRRESFADMGASVAAHLGLPPLGAGQAWW.

Residues D10, D305, H310, D346, H347, and H358 each coordinate Mn(2+).

It belongs to the phosphopentomutase family. It depends on Mn(2+) as a cofactor.

It is found in the cytoplasm. The enzyme catalyses 2-deoxy-alpha-D-ribose 1-phosphate = 2-deoxy-D-ribose 5-phosphate. It carries out the reaction alpha-D-ribose 1-phosphate = D-ribose 5-phosphate. The protein operates within carbohydrate degradation; 2-deoxy-D-ribose 1-phosphate degradation; D-glyceraldehyde 3-phosphate and acetaldehyde from 2-deoxy-alpha-D-ribose 1-phosphate: step 1/2. Functionally, isomerase that catalyzes the conversion of deoxy-ribose 1-phosphate (dRib-1-P) and ribose 1-phosphate (Rib-1-P) to deoxy-ribose 5-phosphate (dRib-5-P) and ribose 5-phosphate (Rib-5-P), respectively. This is Phosphopentomutase from Methylorubrum extorquens (strain PA1) (Methylobacterium extorquens).